Reading from the N-terminus, the 754-residue chain is Peptidyl-prolyl cis-trans isomerase G (754 aa).

Residues 11-176 (FFDIAINNQP…AEVRILSCGE (166 aa)) form the PPIase cyclophilin-type domain. Positions 182 to 193 (KVKKEEKKRHKS) are enriched in basic residues. Positions 182–754 (KVKKEEKKRH…SPGTDEDKSG (573 aa)) are disordered. Residues 194 to 216 (SSSSSSSSSDSDSSSDSQSSSDS) show a composition bias toward low complexity. Residues 228 to 253 (KKRKKKHRKNSRKHKKEKKKRKKSKK) are compositionally biased toward basic residues. 5 positions are modified to phosphoserine: Ser254, Ser256, Ser257, Ser259, and Ser290. A compositionally biased stretch (basic and acidic residues) spans 292 to 310 (PKADEKERKNREREREREC). Position 315 is a phosphoserine (Ser315). A compositionally biased stretch (basic residues) spans 329–347 (SGRKIKGRGPRRYRTPSRS). Composition is skewed to basic and acidic residues over residues 348–368 (RSRD…EMQR) and 379–449 (RWIK…DKYK). Ser356 is subject to Phosphoserine. Phosphothreonine is present on Thr358. Ser386 bears the Phosphoserine mark. A Glycyl lysine isopeptide (Lys-Gly) (interchain with G-Cter in SUMO2) cross-link involves residue Lys392. Phosphoserine is present on residues Ser397, Ser413, and Ser415. Residues 450–462 (NKVKKRAKSKSRS) are compositionally biased toward basic residues. 2 stretches are compositionally biased toward basic and acidic residues: residues 463–553 (KSKE…DITK) and 578–599 (RTHD…QEYR). Over residues 616-627 (SRSKDRRRRRRD) the composition is skewed to basic residues. Basic and acidic residues predominate over residues 628-686 (SRSSEREESQSRNKDKYRNQESKSSHRKENSESEKRMYSKSRDHNSSNNSREKKADRDQ). Ser687 and Ser690 each carry phosphoserine. A compositionally biased stretch (polar residues) spans 687–698 (SPFSKIKQSSQD). Residue Lys693 forms a Glycyl lysine isopeptide (Lys-Gly) (interchain with G-Cter in SUMO2) linkage. Ser696, Ser744, and Ser745 each carry phosphoserine. Basic and acidic residues predominate over residues 707-754 (KNKEDEKIRSSVEKENQKSKGQENDHVHEKNKKFDHESSPGTDEDKSG). Phosphothreonine is present on Thr748. Ser753 carries the phosphoserine modification.

In terms of assembly, interacts with CLK1, PNN and with the phosphorylated C-terminal domain of RNA polymerase II. Ubiquitous.

It localises to the nucleus matrix. Its subcellular location is the nucleus speckle. It catalyses the reaction [protein]-peptidylproline (omega=180) = [protein]-peptidylproline (omega=0). Its activity is regulated as follows. Inhibited by cyclosporin A (CsA). In terms of biological role, PPIase that catalyzes the cis-trans isomerization of proline imidic peptide bonds in oligopeptides and may therefore assist protein folding. May be implicated in the folding, transport, and assembly of proteins. May play an important role in the regulation of pre-mRNA splicing. This Homo sapiens (Human) protein is Peptidyl-prolyl cis-trans isomerase G (PPIG).